Reading from the N-terminus, the 156-residue chain is Small ribosomal subunit protein uS7 (156 aa).

Belongs to the universal ribosomal protein uS7 family. Part of the 30S ribosomal subunit. Contacts proteins S9 and S11.

Its function is as follows. One of the primary rRNA binding proteins, it binds directly to 16S rRNA where it nucleates assembly of the head domain of the 30S subunit. Is located at the subunit interface close to the decoding center, probably blocks exit of the E-site tRNA. The polypeptide is Small ribosomal subunit protein uS7 (Pectobacterium carotovorum subsp. carotovorum (strain PC1)).